A 930-amino-acid polypeptide reads, in one-letter code: Xanthan lyase (930 aa).

The first 25 residues, 1–25 (MLSGILIAALLMTLWGGWQPDIAHA), serve as a signal peptide directing secretion. Xanthan is bound by residues 146-148 (NWW), H246, Y255, R309, 313-315 (RSY), and N424. Residue Y255 is the Proton donor/acceptor of the active site. Ca(2+) is bound by residues D515, D516, and E517. R612 is a binding site for xanthan. E676 serves as a coordination point for Ca(2+).

It belongs to the polysaccharide lyase 8 family. As to quaternary structure, monomer.

Its subcellular location is the secreted. It carries out the reaction Eliminative cleavage of the terminal beta-D-mannosyl-(1-&gt;4)-beta-D-glucuronosyl linkage of the side-chain of the polysaccharide xanthan, leaving a 4-deoxy-alpha-L-threo-hex-4-enuronosyl group at the terminus of the side-chain.. Its activity is regulated as follows. Activated by Co(2+) at 1 mM. Completely inhibited by Hg(2+) but not affected by other divalent cations. Intensely inhibited by NaCl and KCl at 150 mM, in particular by the Na(+) and K(+) ions but not the Cl(-) ions. Partially inhibited by iodoacetamide and N-ethylmaleimide at 1 mM but not by dithiothreitol, reduced glutathione or 2-mercaptoethanol. Functionally, plays a role in xanthan depolymerization pathway by cleaving the linkage between the terminal mannosyl and glucuronyl residues of the side chain of xanthan to liberate pyruvylated mannose. Is highly specific for pyruvylated side-chains of xanthan and is not effective with hyaluronate, chondroitin A, gellan, heparin or pectin. The polypeptide is Xanthan lyase (Bacillus sp. (strain GL1)).